The sequence spans 476 residues: POC1 centriolar protein homolog B (476 aa).

WD repeat units follow at residues 16–55 (GHKA…RAYR), 58–97 (GHKD…KSSE), 100–139 (AHTA…FLYS), 142–181 (RHTH…CVNN), 183–223 (SDSV…LLQH), 226–265 (VHSC…LIYT), and 268–307 (GHTG…LHCK). A coiled-coil region spans residues 429–468 (ALEHIMEQLNILTQTVSILEQRLSLTEDKLRDCLENQQKL).

The protein belongs to the WD repeat POC1 family. In terms of assembly, interacts with POC1A. Interacts with FAM161A. Interacts with CEP44; the interaction is direct and recruits POC1B to centriolar microtubules. Forms a microtubule-associated complex with POC5, CETN2 and FAM161A. Interacts with CCDC15. Post-translationally, phosphorylated in mitotic cells that may be mediated by CDK1. As to expression, expressed in the retina.

It is found in the cytoplasm. The protein resides in the cytoskeleton. It localises to the microtubule organizing center. The protein localises to the centrosome. Its subcellular location is the centriole. It is found in the cilium basal body. The protein resides in the spindle pole. In terms of biological role, plays an important role in centriole assembly and/or stability and ciliogenesis. Involved in early steps of centriole duplication, as well as in the later steps of centriole length control. Acts in concert with POC1A to ensure centriole integrity and proper mitotic spindle formation. Required for primary cilia formation, ciliary length and also cell proliferation. Required for retinal integrity. Acts as a positive regulator of centriole elongation. The chain is POC1 centriolar protein homolog B (Poc1b) from Mus musculus (Mouse).